The sequence spans 308 residues: Ribonuclease HIII (308 aa).

In terms of domain architecture, RNase H type-2 spans 88–304; the sequence is FHCIGSDEAG…RDKAIHLMNQ (217 aa). Residues Asp94, Glu95, and Asp199 each coordinate a divalent metal cation.

The protein belongs to the RNase HII family. RnhC subfamily. It depends on Mn(2+) as a cofactor. Mg(2+) serves as cofactor.

Its subcellular location is the cytoplasm. It carries out the reaction Endonucleolytic cleavage to 5'-phosphomonoester.. Its function is as follows. Endonuclease that specifically degrades the RNA of RNA-DNA hybrids. The sequence is that of Ribonuclease HIII from Staphylococcus epidermidis (strain ATCC 12228 / FDA PCI 1200).